A 367-amino-acid polypeptide reads, in one-letter code: MSVLRAVLVQDMARALLLAAAAFILTLIVGGWWVHFARKHKLGKRIRPDGPQSHLVKVGTPTMGGVMIVSTVVVLTVLFNLVDRWSMLLPLGVMISFAVLGAIDDWLSLTGTRSKTHGFTVRFKFWIMTAVAFVASLALYLPQPYGLEHEGLVQIPFVGEVNIGLWFIPIAVLIIVFISNAVNITDGLDSLAGWNLTLSFGAYGVITFLAEPRLTNLMAFCFTVVGACAAFLWYNAYPAQVFMGDLGALSLGATLAVVALQSQQWILLPVIGIVFVVEALSTLIQTGYFKWTKWRYGEGRRVFKMAPLHHHFELLGWSQPQVTQRFVLIGTVAAMVGISLALIFGSPQSQTQVDQPAMIVQETDGVR.

Transmembrane regions (helical) follow at residues leucine 16–phenylalanine 36, threonine 62–valine 82, methionine 87–leucine 107, phenylalanine 125–tyrosine 145, valine 158–isoleucine 178, serine 190–alanine 210, leucine 214–tyrosine 234, glutamine 240–leucine 260, glutamine 264–isoleucine 284, and phenylalanine 326–serine 346.

It belongs to the glycosyltransferase 4 family. MraY subfamily. Mg(2+) is required as a cofactor.

It localises to the cell membrane. The enzyme catalyses UDP-N-acetyl-alpha-D-muramoyl-L-alanyl-gamma-D-glutamyl-meso-2,6-diaminopimeloyl-D-alanyl-D-alanine + di-trans,octa-cis-undecaprenyl phosphate = di-trans,octa-cis-undecaprenyl diphospho-N-acetyl-alpha-D-muramoyl-L-alanyl-D-glutamyl-meso-2,6-diaminopimeloyl-D-alanyl-D-alanine + UMP. It functions in the pathway cell wall biogenesis; peptidoglycan biosynthesis. In terms of biological role, catalyzes the initial step of the lipid cycle reactions in the biosynthesis of the cell wall peptidoglycan: transfers peptidoglycan precursor phospho-MurNAc-pentapeptide from UDP-MurNAc-pentapeptide onto the lipid carrier undecaprenyl phosphate, yielding undecaprenyl-pyrophosphoryl-MurNAc-pentapeptide, known as lipid I. This is Phospho-N-acetylmuramoyl-pentapeptide-transferase from Chloroflexus aggregans (strain MD-66 / DSM 9485).